Consider the following 339-residue polypeptide: Centrosomal protein of 41 kDa (339 aa).

Residues 56 to 99 (RLEDSDSATSEADTDIAAKTNGKGSPEEQSPSPVQFINSTGAGD) are disordered. Phosphoserine occurs at positions 62 and 65. Residues 62–73 (SATSEADTDIAA) are compositionally biased toward low complexity. At T75 the chain carries Phosphothreonine. Phosphoserine is present on residues S80 and S87. Polar residues predominate over residues 82 to 99 (EEQSPSPVQFINSTGAGD). One can recognise a Rhodanese domain in the interval 135–232 (PDCPFLLLDV…LAQKFPEGLV (98 aa)). A disordered region spans residues 283–339 (DQGPANNPSRLNQNNSAGRDLKVPAGRGGQNLPTGCPTSHSNSRTLNSGHLQGKPWK). The segment covering 286-299 (PANNPSRLNQNNSA) has biased composition (polar residues). At R309 the chain carries Omega-N-methylarginine. The segment covering 313–332 (NLPTGCPTSHSNSRTLNSGH) has biased composition (polar residues).

The protein belongs to the CEP41 family. In terms of assembly, found in a complex with TTLL6.

Its subcellular location is the cytoplasm. It is found in the cytoskeleton. The protein localises to the microtubule organizing center. The protein resides in the centrosome. It localises to the cell projection. Its subcellular location is the cilium. It is found in the cilium basal body. In terms of biological role, required during ciliogenesis for tubulin glutamylation in cilium. Probably acts by participating in the transport of TTLL6, a tubulin polyglutamylase, between the basal body and the cilium. The chain is Centrosomal protein of 41 kDa (Cep41) from Rattus norvegicus (Rat).